The primary structure comprises 569 residues: Potassium-transporting ATPase potassium-binding subunit (569 aa).

10 helical membrane passes run 3–23 (TEILGVALQILLLLVISYPLG), 64–84 (FLKSLLIINVFWFFWGMILLV), 133–153 (FVIMLFQFITAATGMAAMAGI), 179–199 (ILFPMSLIVGFILIIQGTPMG), 255–275 (IVECWSILIIPMALVFALGFY), 281–301 (LGYVIYGVMLFAYLLGVFCNV), 375–395 (FGGVGVGFMNYYAFLIIAVFI), 421–441 (IVSLAHPFVILIFTAISSYVW), 497–517 (LALIISRYLPIVGQVAIAGLL), and 535–555 (VTFGVMTFFVIVIVAALSFFP).

The protein belongs to the KdpA family. In terms of assembly, the system is composed of three essential subunits: KdpA, KdpB and KdpC.

It localises to the cell inner membrane. Functionally, part of the high-affinity ATP-driven potassium transport (or Kdp) system, which catalyzes the hydrolysis of ATP coupled with the electrogenic transport of potassium into the cytoplasm. This subunit binds the periplasmic potassium ions and delivers the ions to the membrane domain of KdpB through an intramembrane tunnel. The sequence is that of Potassium-transporting ATPase potassium-binding subunit from Parabacteroides distasonis (strain ATCC 8503 / DSM 20701 / CIP 104284 / JCM 5825 / NCTC 11152).